Reading from the N-terminus, the 178-residue chain is Large ribosomal subunit protein bL25 (178 aa).

This sequence belongs to the bacterial ribosomal protein bL25 family. CTC subfamily. As to quaternary structure, part of the 50S ribosomal subunit; part of the 5S rRNA/L5/L18/L25 subcomplex. Contacts the 5S rRNA. Binds to the 5S rRNA independently of L5 and L18.

Functionally, this is one of the proteins that binds to the 5S RNA in the ribosome where it forms part of the central protuberance. This chain is Large ribosomal subunit protein bL25, found in Helicobacter pylori (strain ATCC 700392 / 26695) (Campylobacter pylori).